A 157-amino-acid polypeptide reads, in one-letter code: Large ribosomal subunit protein uL15 (157 aa).

The tract at residues 1 to 41 (MKLHELSDNPGATKKRKRVGRGPGSGTGKMGGRGIKGQKSR) is disordered. Positions 21–35 (RGPGSGTGKMGGRGI) are enriched in gly residues.

Belongs to the universal ribosomal protein uL15 family. As to quaternary structure, part of the 50S ribosomal subunit.

Its function is as follows. Binds to the 23S rRNA. The protein is Large ribosomal subunit protein uL15 of Jannaschia sp. (strain CCS1).